A 355-amino-acid chain; its full sequence is Peptide chain release factor 1 (355 aa).

Gln-233 carries the N5-methylglutamine modification.

Belongs to the prokaryotic/mitochondrial release factor family. Post-translationally, methylated by PrmC. Methylation increases the termination efficiency of RF1.

Its subcellular location is the cytoplasm. Functionally, peptide chain release factor 1 directs the termination of translation in response to the peptide chain termination codons UAG and UAA. The sequence is that of Peptide chain release factor 1 from Desulforudis audaxviator (strain MP104C).